A 991-amino-acid chain; its full sequence is Mediator of RNA polymerase II transcription subunit 5 (991 aa).

The protein belongs to the Mediator complex subunit 5 family. As to quaternary structure, component of the Mediator complex.

The protein localises to the nucleus. Component of the Mediator complex, a coactivator involved in the regulated transcription of nearly all RNA polymerase II-dependent genes. Mediator functions as a bridge to convey information from gene-specific regulatory proteins to the basal RNA polymerase II transcription machinery. Mediator is recruited to promoters by direct interactions with regulatory proteins and serves as a scaffold for the assembly of a functional preinitiation complex with RNA polymerase II and the general transcription factors. The protein is Mediator of RNA polymerase II transcription subunit 5 (NUT1) of Yarrowia lipolytica (strain CLIB 122 / E 150) (Yeast).